The primary structure comprises 242 residues: UDP-2,3-diacylglucosamine hydrolase (242 aa).

Mn(2+) contacts are provided by Asp9, His11, Asp42, Asn79, and His114. Residue 79-80 (NR) participates in substrate binding. Asp122, Ser160, Asn164, Lys167, and His195 together coordinate substrate. Mn(2+) is bound by residues His195 and His197.

This sequence belongs to the LpxH family. Requires Mn(2+) as cofactor.

It is found in the cell inner membrane. It carries out the reaction UDP-2-N,3-O-bis[(3R)-3-hydroxytetradecanoyl]-alpha-D-glucosamine + H2O = 2-N,3-O-bis[(3R)-3-hydroxytetradecanoyl]-alpha-D-glucosaminyl 1-phosphate + UMP + 2 H(+). Its pathway is glycolipid biosynthesis; lipid IV(A) biosynthesis; lipid IV(A) from (3R)-3-hydroxytetradecanoyl-[acyl-carrier-protein] and UDP-N-acetyl-alpha-D-glucosamine: step 4/6. Hydrolyzes the pyrophosphate bond of UDP-2,3-diacylglucosamine to yield 2,3-diacylglucosamine 1-phosphate (lipid X) and UMP by catalyzing the attack of water at the alpha-P atom. Involved in the biosynthesis of lipid A, a phosphorylated glycolipid that anchors the lipopolysaccharide to the outer membrane of the cell. In Shewanella loihica (strain ATCC BAA-1088 / PV-4), this protein is UDP-2,3-diacylglucosamine hydrolase.